The chain runs to 202 residues: Glycerol-3-phosphate acyltransferase 1 (202 aa).

The next 5 membrane-spanning stretches (helical) occupy residues 8-28 (AGMI…MSTG), 85-105 (LSLT…IWPL), 122-142 (ILVV…FVLA), 146-166 (QFTL…LIMA), and 173-190 (AGLA…RKNI).

Belongs to the PlsY family. Probably interacts with PlsX.

It localises to the cell membrane. It catalyses the reaction an acyl phosphate + sn-glycerol 3-phosphate = a 1-acyl-sn-glycero-3-phosphate + phosphate. Its pathway is lipid metabolism; phospholipid metabolism. In terms of biological role, catalyzes the transfer of an acyl group from acyl-phosphate (acyl-PO(4)) to glycerol-3-phosphate (G3P) to form lysophosphatidic acid (LPA). This enzyme utilizes acyl-phosphate as fatty acyl donor, but not acyl-CoA or acyl-ACP. The polypeptide is Glycerol-3-phosphate acyltransferase 1 (Desulfitobacterium hafniense (strain Y51)).